The following is a 160-amino-acid chain: Cyanate hydratase (160 aa).

Active-site residues include arginine 100, glutamate 103, and serine 126.

The protein belongs to the cyanase family.

The enzyme catalyses cyanate + hydrogencarbonate + 3 H(+) = NH4(+) + 2 CO2. Catalyzes the reaction of cyanate with bicarbonate to produce ammonia and carbon dioxide. The chain is Cyanate hydratase from Arthroderma otae (strain ATCC MYA-4605 / CBS 113480) (Microsporum canis).